The sequence spans 207 residues: BTB/POZ domain-containing protein At1g01640 (207 aa).

The region spanning 24–94 is the BTB domain; that stretch reads TDVLVKPGEE…LYSGNLKAPY (71 aa).

Interacts with CUL3A.

The protein operates within protein modification; protein ubiquitination. May act as a substrate-specific adapter of an E3 ubiquitin-protein ligase complex (CUL3-RBX1-BTB) which mediates the ubiquitination and subsequent proteasomal degradation of target proteins. The polypeptide is BTB/POZ domain-containing protein At1g01640 (Arabidopsis thaliana (Mouse-ear cress)).